We begin with the raw amino-acid sequence, 244 residues long: Venom nerve growth factor 2 (244 aa).

The N-terminal stretch at 1–18 is a signal peptide; the sequence is MSMLCYTLIIAFLIGIWA. Residues 19–125 constitute a propeptide that is removed on maturation; that stretch reads APKSEDNVPL…TLNRNIRAKR (107 aa). The segment covering 47–66 has biased composition (basic and acidic residues); it reads GLKTSRNTDQRHPAPKKAED. A disordered region spans residues 47 to 69; sequence GLKTSRNTDQRHPAPKKAEDQEL. Disulfide bonds link C139–C205 and C181–C233.

It belongs to the NGF-beta family. Homodimer; non-covalently linked. As to expression, expressed by the venom gland.

It localises to the secreted. Functionally, nerve growth factor is important for the development and maintenance of the sympathetic and sensory nervous systems. It stimulates division and differentiation of sympathetic and embryonic sensory neurons as well as basal forebrain cholinergic neurons in the brain. Its relevance in the snake venom is not clear. However, it has been shown to inhibit metalloproteinase-dependent proteolysis of platelet glycoprotein Ib alpha, suggesting a metalloproteinase inhibition to prevent metalloprotease autodigestion and/or protection against prey proteases. Binds a lipid between the two protein chains in the homodimer. The lipid-bound form promotes histamine relase from mouse mast cells, contrary to the lipid-free form. The sequence is that of Venom nerve growth factor 2 from Notechis scutatus scutatus (Mainland tiger snake).